The sequence spans 405 residues: Argininosuccinate synthase (405 aa).

An ATP-binding site is contributed by 11–19 (AYSGGLDTS). Tyrosine 90 serves as a coordination point for L-citrulline. Glycine 119 lines the ATP pocket. Threonine 121, asparagine 125, and aspartate 126 together coordinate L-aspartate. Asparagine 125 provides a ligand contact to L-citrulline. Positions 129, 178, 187, 263, and 275 each coordinate L-citrulline.

Belongs to the argininosuccinate synthase family. Type 1 subfamily. As to quaternary structure, homotetramer.

It is found in the cytoplasm. It catalyses the reaction L-citrulline + L-aspartate + ATP = 2-(N(omega)-L-arginino)succinate + AMP + diphosphate + H(+). It participates in amino-acid biosynthesis; L-arginine biosynthesis; L-arginine from L-ornithine and carbamoyl phosphate: step 2/3. The protein is Argininosuccinate synthase of Legionella pneumophila (strain Paris).